The sequence spans 164 residues: Cyclic pyranopterin monophosphate synthase (164 aa).

Substrate contacts are provided by residues 75 to 77 and 116 to 117; these read MCH and ME. Asp131 is an active-site residue.

Belongs to the MoaC family. In terms of assembly, homohexamer; trimer of dimers.

It catalyses the reaction (8S)-3',8-cyclo-7,8-dihydroguanosine 5'-triphosphate = cyclic pyranopterin phosphate + diphosphate. It functions in the pathway cofactor biosynthesis; molybdopterin biosynthesis. Catalyzes the conversion of (8S)-3',8-cyclo-7,8-dihydroguanosine 5'-triphosphate to cyclic pyranopterin monophosphate (cPMP). The sequence is that of Cyclic pyranopterin monophosphate synthase from Staphylococcus aureus (strain bovine RF122 / ET3-1).